Reading from the N-terminus, the 940-residue chain is PTS system glucose-specific EIICBA component (940 aa).

The PTS EIIC type-1; first part domain maps to 1–284; that stretch reads MQIKAQDTGQ…YAPLWYTSAG (284 aa). Helical transmembrane passes span 43-63, 83-103, 112-132, 175-195, and 209-229; these read LMIP…GDAI, GGDV…AITF, FSAF…ILPF, VFGG…FYAI, and FVPI…LMIW. The tract at residues 285–478 is unknown; it reads GSLQEIVNQQ…VNSFRVAVES (194 aa). The 152-residue stretch at 479–630 folds into the PTS EIIC type-1; second part domain; the sequence is LNPAQYSQGK…FNLATPGRGG (152 aa). A run of 5 helical transmembrane segments spans residues 487–507, 515–535, 537–557, 564–584, and 598–618; these read GKFP…ILAA, AASI…TEPF, FTFL…LAAV, ILGA…ILYG, and LVPI…YFLI. The PTS EIIB type-1 domain occupies 661–743; the sequence is QIEAGILLQA…QDIIQGKVNW (83 aa). The active-site Phosphocysteine intermediate; for EIIB activity is Cys-683. The PTS EIIA type-1 domain occupies 794–907; the sequence is DETFKQKLVG…NPITPFVVMK (114 aa). His-847 serves as the catalytic Tele-phosphohistidine intermediate; for EIIA activity.

Its subcellular location is the cell membrane. It carries out the reaction N(pros)-phospho-L-histidyl-[protein] + D-glucose(out) = D-glucose 6-phosphate(in) + L-histidyl-[protein]. The phosphoenolpyruvate-dependent sugar phosphotransferase system (sugar PTS), a major carbohydrate active transport system, catalyzes the phosphorylation of incoming sugar substrates concomitantly with their translocation across the cell membrane. This system is involved in glucose transport. The protein is PTS system glucose-specific EIICBA component (ptsG) of Mycoplasma pneumoniae (strain ATCC 29342 / M129 / Subtype 1) (Mycoplasmoides pneumoniae).